The following is a 481-amino-acid chain: ATP synthase subunit beta, chloroplastic (481 aa).

ATP is bound at residue 161–168; sequence GGAGVGKT.

This sequence belongs to the ATPase alpha/beta chains family. In terms of assembly, F-type ATPases have 2 components, CF(1) - the catalytic core - and CF(0) - the membrane proton channel. CF(1) has five subunits: alpha(3), beta(3), gamma(1), delta(1), epsilon(1). CF(0) has four main subunits: a(1), b(1), b'(1) and c(9-12).

It is found in the plastid. The protein resides in the chloroplast thylakoid membrane. It carries out the reaction ATP + H2O + 4 H(+)(in) = ADP + phosphate + 5 H(+)(out). Its function is as follows. Produces ATP from ADP in the presence of a proton gradient across the membrane. The catalytic sites are hosted primarily by the beta subunits. This Dictyota dichotoma protein is ATP synthase subunit beta, chloroplastic.